A 216-amino-acid polypeptide reads, in one-letter code: GTP cyclohydrolase 1 (216 aa).

Positions 108, 111, and 179 each coordinate Zn(2+).

Belongs to the GTP cyclohydrolase I family. Toroid-shaped homodecamer, composed of two pentamers of five dimers.

The catalysed reaction is GTP + H2O = 7,8-dihydroneopterin 3'-triphosphate + formate + H(+). It participates in cofactor biosynthesis; 7,8-dihydroneopterin triphosphate biosynthesis; 7,8-dihydroneopterin triphosphate from GTP: step 1/1. In Shewanella sp. (strain ANA-3), this protein is GTP cyclohydrolase 1.